Reading from the N-terminus, the 328-residue chain is Glucokinase (328 aa).

16–21 (ADIGGT) is a binding site for ATP.

It belongs to the bacterial glucokinase family.

Its subcellular location is the cytoplasm. The catalysed reaction is D-glucose + ATP = D-glucose 6-phosphate + ADP + H(+). This Neisseria meningitidis serogroup C (strain 053442) protein is Glucokinase.